Reading from the N-terminus, the 218-residue chain is NAD(P)H-quinone oxidoreductase subunit I (218 aa).

2 4Fe-4S ferredoxin-type domains span residues 55–84 (GRIHYEFDKCIACEVCVRVCPINLPVVDWV) and 95–124 (RNYSIDFGVCIFCGNCVEYCPTNCLSMTEE). The [4Fe-4S] cluster site is built by Cys64, Cys67, Cys70, Cys74, Cys104, Cys107, Cys110, and Cys114. Positions 192 to 218 (LSLQQDSLQGDEGESLQDAPDQDQPKG) are disordered.

Belongs to the complex I 23 kDa subunit family. NDH-1 is composed of at least 11 different subunits. [4Fe-4S] cluster is required as a cofactor.

Its subcellular location is the cellular thylakoid membrane. It carries out the reaction a plastoquinone + NADH + (n+1) H(+)(in) = a plastoquinol + NAD(+) + n H(+)(out). The catalysed reaction is a plastoquinone + NADPH + (n+1) H(+)(in) = a plastoquinol + NADP(+) + n H(+)(out). Functionally, NDH-1 shuttles electrons from an unknown electron donor, via FMN and iron-sulfur (Fe-S) centers, to quinones in the respiratory and/or the photosynthetic chain. The immediate electron acceptor for the enzyme in this species is believed to be plastoquinone. Couples the redox reaction to proton translocation, and thus conserves the redox energy in a proton gradient. This is NAD(P)H-quinone oxidoreductase subunit I from Prochlorococcus marinus (strain MIT 9303).